The chain runs to 655 residues: p-hydroxybenzoic acid efflux pump subunit AaeB (655 aa).

Residues 1–12 (MGIFSIANQHIR) lie on the Periplasmic side of the membrane. The helical transmembrane segment at 13 to 33 (FAVKLATAIVLALFVGFHFQL) threads the bilayer. At 34-37 (ETPR) the chain is on the cytoplasmic side. A helical membrane pass occupies residues 38–58 (WAVLTAAIVAAGPAFAAGGEP). The Periplasmic portion of the chain corresponds to 59–68 (YSGAIRYRGF). The helical transmembrane segment at 69 to 89 (LRIIGTFIGCIAGLVIIIAMI) threads the bilayer. Topologically, residues 90–92 (RAP) are cytoplasmic. The helical transmembrane segment at 93–113 (LLMILVCCIWAGFCTWISSLV) threads the bilayer. The Periplasmic portion of the chain corresponds to 114-120 (RIENSYA). Residues 121 to 141 (WGLAGYTALIIVITIQPEPLL) form a helical membrane-spanning segment. At 142–151 (TPQFAVERCS) the chain is on the cytoplasmic side. The chain crosses the membrane as a helical span at residues 152–172 (EIVIGIVCAIMADLLFSPRSI). Residues 173–369 (KQEVDRELES…RTTLSCILGT (197 aa)) lie on the Periplasmic side of the membrane. A helical membrane pass occupies residues 370-390 (LFWLWTGWTSGSGAMVMIAVV). Residues 391–406 (TSLAMRLPNPRMVAID) lie on the Cytoplasmic side of the membrane. Residues 407–427 (FIYGTLAALPLGLLYFLVIIP) traverse the membrane as a helical segment. Residues 428 to 430 (NTQ) lie on the Periplasmic side of the membrane. A helical membrane pass occupies residues 431–451 (QSMLLLCISLAVLGFFLGIEV). The Cytoplasmic segment spans residues 452–458 (QKRRLGS). Residues 459-479 (MGALASTINIIVLDNPMTFHF) traverse the membrane as a helical segment. The Periplasmic segment spans residues 480-481 (SQ). Residues 482 to 502 (FLDSALGQIVGCVLAFTVILL) traverse the membrane as a helical segment. Topologically, residues 503-655 (VRDKSRDRTG…HKYQHALTDS (153 aa)) are cytoplasmic.

The protein belongs to the aromatic acid exporter ArAE (TC 2.A.85) family.

It localises to the cell inner membrane. Functionally, forms an efflux pump with AaeA. Could function as a metabolic relief valve, allowing to eliminate certain compounds when they accumulate to high levels in the cell. This chain is p-hydroxybenzoic acid efflux pump subunit AaeB, found in Shigella flexneri.